The chain runs to 353 residues: GDP-mannose transporter (353 aa).

At 1 to 31 the chain is on the cytoplasmic side; the sequence is MGLLLSYLFGYIFYSVNKKFHIMEKFGASNS. The chain crosses the membrane as a helical span at residues 32–52; the sequence is IVNNGPVSIFAYCASSILMTV. At 53–66 the chain is on the lumenal side; that stretch reads TNKFVVGAYEFNLN. A helical membrane pass occupies residues 67–87; that stretch reads FFLLAVQAAVCLVTIATLKGL. Over 88-102 the chain is Cytoplasmic; sequence GIITYRQFNKDEAKK. The chain crosses the membrane as a helical span at residues 103–122; sequence WFPIAFLLVLMIYTSSKALQ. Residues 123-125 are Lumenal-facing; it reads YLS. The chain crosses the membrane as a helical span at residues 126–148; sequence IPVYTIFKNLTIILIAYGEVIWF. Residues 149 to 154 are Cytoplasmic-facing; the sequence is GGKVTT. A helical membrane pass occupies residues 155–172; that stretch reads MALGSFILMVLSSVIAYY. The Lumenal portion of the chain corresponds to 173-187; it reads GDTAETGEKTAEMHL. Residues 188–208 form a helical membrane-spanning segment; sequence LYLGYAWMFTNCFSSAAFVLI. Residues 209-227 are Cytoplasmic-facing; the sequence is MRKRIKLTNFKDFDTMYYN. Residues 228 to 248 form a helical membrane-spanning segment; that stretch reads NLLSLPLLLVFSFLFEDWSSV. Topologically, residues 249-262 are lumenal; sequence NLNKNFPPDNRNTT. N260 is a glycosylation site (N-linked (GlcNAc...) asparagine). Residues 263 to 283 traverse the membrane as a helical segment; sequence IFVMILSGASSVGISYCSAWC. Residues 284-290 lie on the Cytoplasmic side of the membrane; it reads VRVTSST. A helical membrane pass occupies residues 291 to 313; that stretch reads TYSMVGALNKLPIALSGLVFFNA. Over 314 to 316 the chain is Lumenal; it reads AVN. A helical transmembrane segment spans residues 317–336; the sequence is FWSVSSIFVGFLAGVFYAVA. At 337–353 the chain is on the cytoplasmic side; it reads KQKQQKENAQQLPVANK.

Belongs to the TPT transporter family. SLC35D subfamily. In terms of assembly, homooligomer.

It localises to the golgi apparatus membrane. Its subcellular location is the cytoplasmic vesicle membrane. It is found in the endoplasmic reticulum membrane. Its function is as follows. Involved in the import of GDP-mannose from the cytoplasm into the Golgi lumen. This chain is GDP-mannose transporter (VRG4), found in Meyerozyma guilliermondii (strain ATCC 6260 / CBS 566 / DSM 6381 / JCM 1539 / NBRC 10279 / NRRL Y-324) (Yeast).